The primary structure comprises 917 residues: Thiamine biosynthesis bifunctional protein ThiEC (917 aa).

A thiamine-phosphate synthase region spans residues 1–243 (MSNEYPYASM…EGWKAVRGDK (243 aa)). Residues 48 to 52 (QLRAK) and aspartate 84 contribute to the 4-amino-2-methyl-5-(diphosphooxymethyl)pyrimidine site. 2 residues coordinate Mg(2+): aspartate 85 and aspartate 109. 4-amino-2-methyl-5-(diphosphooxymethyl)pyrimidine is bound at residue serine 128. 157-159 (STT) lines the 2-[(2R,5Z)-2-carboxy-4-methylthiazol-5(2H)-ylidene]ethyl phosphate pocket. Lysine 160 is a 4-amino-2-methyl-5-(diphosphooxymethyl)pyrimidine binding site. Residues glycine 196 and 216–217 (VS) each bind 2-[(2R,5Z)-2-carboxy-4-methylthiazol-5(2H)-ylidene]ethyl phosphate. Residues 256 to 311 (PATDTQAAQEGAAKPGSEATEKKFTNAKDAKDAQKLAKQQRVDIAARGSKQRDKAH) are disordered. Positions 271 to 917 (GSEATEKKFT…GGKLYSTAQE (647 aa)) are phosphomethylpyrimidine synthase. Residues 274 to 290 (ATEKKFTNAKDAKDAQK) show a composition bias toward basic and acidic residues. 5-amino-1-(5-phospho-beta-D-ribosyl)imidazole-binding positions include asparagine 487, methionine 516, tyrosine 545, histidine 581, 601–603 (SRG), 642–645 (DGLR), and glutamate 681. Residue histidine 685 coordinates Zn(2+). 5-amino-1-(5-phospho-beta-D-ribosyl)imidazole is bound at residue tyrosine 708. Residue histidine 749 coordinates Zn(2+). The [4Fe-4S] cluster site is built by cysteine 829, cysteine 832, and cysteine 837.

It in the N-terminal section; belongs to the thiamine-phosphate synthase family. The protein in the C-terminal section; belongs to the ThiC family. It depends on [4Fe-4S] cluster as a cofactor.

The catalysed reaction is 2-[(2R,5Z)-2-carboxy-4-methylthiazol-5(2H)-ylidene]ethyl phosphate + 4-amino-2-methyl-5-(diphosphooxymethyl)pyrimidine + 2 H(+) = thiamine phosphate + CO2 + diphosphate. It catalyses the reaction 2-(2-carboxy-4-methylthiazol-5-yl)ethyl phosphate + 4-amino-2-methyl-5-(diphosphooxymethyl)pyrimidine + 2 H(+) = thiamine phosphate + CO2 + diphosphate. It carries out the reaction 4-methyl-5-(2-phosphooxyethyl)-thiazole + 4-amino-2-methyl-5-(diphosphooxymethyl)pyrimidine + H(+) = thiamine phosphate + diphosphate. The enzyme catalyses 5-amino-1-(5-phospho-beta-D-ribosyl)imidazole + S-adenosyl-L-methionine = 4-amino-2-methyl-5-(phosphooxymethyl)pyrimidine + CO + 5'-deoxyadenosine + formate + L-methionine + 3 H(+). It participates in cofactor biosynthesis; thiamine diphosphate biosynthesis; thiamine phosphate from 4-amino-2-methyl-5-diphosphomethylpyrimidine and 4-methyl-5-(2-phosphoethyl)-thiazole: step 1/1. Its function is as follows. Condenses 4-methyl-5-(beta-hydroxyethyl)thiazole monophosphate (THZ-P) and 2-methyl-4-amino-5-hydroxymethyl pyrimidine pyrophosphate (HMP-PP) to form thiamine monophosphate (TMP). Catalyzes the synthesis of the hydroxymethylpyrimidine phosphate (HMP-P) moiety of thiamine from aminoimidazole ribotide (AIR) in a radical S-adenosyl-L-methionine (SAM)-dependent reaction. This chain is Thiamine biosynthesis bifunctional protein ThiEC (thiE/thiC), found in Bifidobacterium longum (strain NCC 2705).